A 376-amino-acid polypeptide reads, in one-letter code: Queuine tRNA-ribosyltransferase accessory subunit 2 (376 aa).

Zn(2+) is bound by residues Cys-323, Cys-325, Cys-328, and His-354.

Belongs to the queuine tRNA-ribosyltransferase family. QTRT2 subfamily. Heterodimer of a catalytic subunit and an accessory subunit. Requires Zn(2+) as cofactor.

It is found in the cytoplasm. Non-catalytic subunit of the queuine tRNA-ribosyltransferase (TGT) that catalyzes the base-exchange of a guanine (G) residue with queuine (Q) at position 34 (anticodon wobble position) in tRNAs with GU(N) anticodons (tRNA-Asp, -Asn, -His and -Tyr), resulting in the hypermodified nucleoside queuosine (7-(((4,5-cis-dihydroxy-2-cyclopenten-1-yl)amino)methyl)-7-deazaguanosine). This is Queuine tRNA-ribosyltransferase accessory subunit 2 from Caenorhabditis briggsae.